Reading from the N-terminus, the 428-residue chain is Acylglycerol kinase, mitochondrial (428 aa).

Positions 18–34 (STVGFCLLAYGSHWLYG) are hydrophobic. Residues 61 to 202 (SAIKKATVFL…LDVLQIKGEQ (142 aa)) form the DAGKc domain.

This sequence belongs to the AGK family. Component of the TIM22 complex. Mg(2+) is required as a cofactor.

Its subcellular location is the mitochondrion inner membrane. It is found in the mitochondrion intermembrane space. The enzyme catalyses a monoacylglycerol + ATP = a monoacyl-sn-glycero-3-phosphate + ADP + H(+). It catalyses the reaction a 1,2-diacyl-sn-glycerol + ATP = a 1,2-diacyl-sn-glycero-3-phosphate + ADP + H(+). The catalysed reaction is an N-acylsphing-4-enine + ATP = an N-acylsphing-4-enine 1-phosphate + ADP + H(+). It carries out the reaction 1-(9Z-octadecenoyl)-sn-glycerol + ATP = 1-(9Z-octadecenoyl)-sn-glycero-3-phosphate + ADP + H(+). The enzyme catalyses 1,2-di-(9Z-octadecenoyl)-sn-glycerol + ATP = 1,2-di-(9Z-octadecenoyl)-sn-glycero-3-phosphate + ADP + H(+). It catalyses the reaction a 1-acyl-sn-glycerol + ATP = a 1-acyl-sn-glycero-3-phosphate + ADP + H(+). The catalysed reaction is 1-hexadecanoyl-sn-glycerol + ATP = 1-hexadecanoyl-sn-glycero-3-phosphate + ADP + H(+). It carries out the reaction a 2-acylglycerol + ATP = a 2-acyl-sn-glycerol 3-phosphate + ADP + H(+). The enzyme catalyses 2-(5Z,8Z,11Z,14Z-eicosatetraenoyl)-glycerol + ATP = 2-(5Z,8Z,11Z,14Z-eicosatetraenoyl)-sn-glycero-3-phosphate + ADP + H(+). It catalyses the reaction 1-(5Z,8Z,11Z,14Z-eicosatetraenoyl)-sn-glycerol + ATP = 1-(5Z,8Z,11Z,14Z-eicosatetraenoyl)-sn-glycero-3-phosphate + ADP + H(+). The catalysed reaction is N-(hexanoyl)sphing-4-enine + ATP = N-hexanoylsphing-4-enine 1-phosphate + ADP + H(+). Its pathway is lipid metabolism; glycerolipid metabolism. Lipid kinase that can phosphorylate both monoacylglycerol and diacylglycerol to form lysophosphatidic acid (LPA) and phosphatidic acid (PA), respectively. Phosphorylates ceramide but not sphingosine. Phosphorylates 1,2-dioleoylglycerol more rapidly than 2,3-dioleoylglycerol. Independently of its lipid kinase activity, acts as a component of the TIM22 complex. The TIM22 complex mediates the import and insertion of multi-pass transmembrane proteins into the mitochondrial inner membrane by forming a twin-pore translocase that uses the membrane potential as the external driving force. The polypeptide is Acylglycerol kinase, mitochondrial (Xenopus laevis (African clawed frog)).